A 257-amino-acid chain; its full sequence is Triosephosphate isomerase (257 aa).

Substrate is bound by residues Asn11 and Lys13. His96 serves as the catalytic Electrophile. The active-site Proton acceptor is Glu170.

The protein belongs to the triosephosphate isomerase family. In terms of assembly, homodimer.

It catalyses the reaction D-glyceraldehyde 3-phosphate = dihydroxyacetone phosphate. Its pathway is carbohydrate biosynthesis; gluconeogenesis. It participates in carbohydrate degradation; glycolysis; D-glyceraldehyde 3-phosphate from glycerone phosphate: step 1/1. In Giardia intestinalis (Giardia lamblia), this protein is Triosephosphate isomerase.